Here is a 901-residue protein sequence, read N- to C-terminus: MLIPSKLSRPVRLDHTVVRERLLAKLSGANNFRLALITSPAGYGKTTLISQWAAGKNDIGWYSLDEGDNQQERFASYLIAAVQQATNGHCAICETMAQKRQYASLTSLFAQLFIELAEWHSPLYLVIDDYHLITNPVIHESMRFFIRHQPENLTLVVLSRNLPQLGIANLRVRDQLLEIGSQQLAFTHQEAKQFFDCRLSSPIEAAESSRICDDVSGWATALQLIALSARQNTHSAHKSARRLAGINASHLSDYLVDEVLDNVDLATRHFLLKSAILRSMNDALITRVTGEENGQMRLEEIERQGLFLQRMDDTGEWFCYHPLFGNFLRQRCQWELAAELPEIHRAAAESWMAQGFPSEAIHHALAAGDALMLRDILLNHAWSLFNHSELSLLEESLKALPWDSLLENPQLVLLQAWLMQSQHRYGEVNTLLARAEHEIKDIREDTMHAEFNALRAQVAINDGNPDEAERLAKLALEELPPGWFYSRIVATSVLGEVLHCKGELTRSLALMQQTEQMARQHDVWHYALWSLIQQSEILFAQGFLQTAWETQEKAFQLINEQHLEQLPMHEFLVRIRAQLLWAWARLDEAEASARRGIEVLSSYQPQQQLQCLAMLIQCSLARGDLDNARSQLNRLENLLGNGKYHSDWISNANKVRVIYWQMTGDKAAAANWLRHTAKPEFANNHFLQGQWRNIARAQILLGEFEPAEIVLEELNENARSLRLMSDLNRNLLLLNQLYWQAGRKSDAQRVLLDALKLANRTGFISHFVIEGEAMAQQLRQLIQLNTLPELEQHRAQRILREINQHHRHKFAHFDENFVERLLNHPEVPELIRTSPLTQREWQVLGLIYSGYSNEQIAGELEVAATTIKTHIRNLYQKLGVAHRQDAVQHAQQLLKMMGYGV.

Residue 39–46 participates in ATP binding; that stretch reads SPAGYGKT. Residues 829 to 894 form the HTH luxR-type domain; it reads ELIRTSPLTQ…DAVQHAQQLL (66 aa). Positions 853-872 form a DNA-binding region, H-T-H motif; that stretch reads NEQIAGELEVAATTIKTHIR.

Belongs to the MalT family. In terms of assembly, monomer in solution. Oligomerizes to an active state in the presence of the positive effectors ATP and maltotriose.

Activated by ATP and maltotriose, which are both required for DNA binding. Functionally, positively regulates the transcription of the maltose regulon whose gene products are responsible for uptake and catabolism of malto-oligosaccharides. Specifically binds to the promoter region of its target genes, recognizing a short DNA motif called the MalT box. The chain is HTH-type transcriptional regulator MalT from Escherichia coli (strain ATCC 8739 / DSM 1576 / NBRC 3972 / NCIMB 8545 / WDCM 00012 / Crooks).